The primary structure comprises 412 residues: Cytochrome p450 CYP199A2 (412 aa).

Residues 94-97 and Ser-247 each bind substrate; that span reads RPPS. Residue Cys-361 participates in heme binding.

It belongs to the cytochrome P450 family. Interacts with the ferredoxin-like iron-sulfur protein ThcC. Heme serves as cofactor.

The protein resides in the cytoplasm. The catalysed reaction is 4-methoxybenzoate + AH2 + O2 = 4-hydroxybenzoate + formaldehyde + A + H2O. Its function is as follows. The oxidative demethylation of 4-methoxybenzoate requires the participation of the monooxygenase CYP199A2, the ferredoxin-like protein ThcC/RPA1872 and a ferredoxin reductase to mediate the transfer of electrons from NADH to CYP199A2. It is also active with 4-ethylbenzoate. This Rhodopseudomonas palustris (strain ATCC BAA-98 / CGA009) protein is Cytochrome p450 CYP199A2.